The sequence spans 219 residues: Probable octanoyltransferase (219 aa).

The BPL/LPL catalytic domain occupies 43-219 (QPPKPTIITS…NNLDSFLMSK (177 aa)). Residues 83–90 (RGGQTTFH), 151–153 (AIG), and 164–166 (GLA) each bind substrate. Residue cysteine 182 is the Acyl-thioester intermediate of the active site.

The protein belongs to the LipB family.

The enzyme catalyses octanoyl-[ACP] + L-lysyl-[protein] = N(6)-octanoyl-L-lysyl-[protein] + holo-[ACP] + H(+). Its pathway is protein modification; protein lipoylation via endogenous pathway; protein N(6)-(lipoyl)lysine from octanoyl-[acyl-carrier-protein]: step 1/2. Functionally, catalyzes the transfer of endogenously produced octanoic acid from octanoyl-acyl-carrier-protein onto the lipoyl domains of lipoate-dependent enzymes. Lipoyl-ACP can also act as a substrate although octanoyl-ACP is likely to be the physiological substrate. This is Probable octanoyltransferase from Schizosaccharomyces pombe (strain 972 / ATCC 24843) (Fission yeast).